A 210-amino-acid chain; its full sequence is MKTLKIPEATIIRLSVYSRHLTDVDRKGIVTISSGDIAEGVGVSPAQVRKDLAYFGEFGTRGVGYNVKDLHRHILKILGLSQDWSVCLVGMGNLGLALTTYKGFRERGFIITSIFDNDPQKIGTTVNGVEVLPVDRLEEVAKANKTQIGIISVPSPYAQEIADKLISAGVQAILNFAPVVLNVPPEVELRNVDLAVNLEVLTFNVGTRRA.

A DNA-binding region (H-T-H motif) is located at residues 16–55 (VYSRHLTDVDRKGIVTISSGDIAEGVGVSPAQVRKDLAYF). 90-95 (GMGNLG) lines the NAD(+) pocket.

It belongs to the transcriptional regulatory Rex family. In terms of assembly, homodimer.

It is found in the cytoplasm. In terms of biological role, modulates transcription in response to changes in cellular NADH/NAD(+) redox state. This chain is Redox-sensing transcriptional repressor Rex, found in Desulfitobacterium hafniense (strain DSM 10664 / DCB-2).